The sequence spans 511 residues: Probable DNA ligase (511 aa).

E208 serves as a coordination point for ATP. Residue K210 is the N6-AMP-lysine intermediate of the active site. ATP is bound by residues R215, R230, E259, F299, R377, and K383.

Belongs to the ATP-dependent DNA ligase family. It depends on Mg(2+) as a cofactor.

The enzyme catalyses ATP + (deoxyribonucleotide)n-3'-hydroxyl + 5'-phospho-(deoxyribonucleotide)m = (deoxyribonucleotide)n+m + AMP + diphosphate.. Functionally, DNA ligase that seals nicks in double-stranded DNA during DNA replication, DNA recombination and DNA repair. The polypeptide is Probable DNA ligase (Streptomyces griseus subsp. griseus (strain JCM 4626 / CBS 651.72 / NBRC 13350 / KCC S-0626 / ISP 5235)).